Consider the following 541-residue polypeptide: tRNA uridine(34) acetyltransferase (541 aa).

Residues 76–336 (KPVRTISGVA…GEYKPYREEE (261 aa)) are radical S-adenosyl-L-methionine (rSAM). Residues 79–350 (RTISGVAVVA…ISYAKSIMPK (272 aa)) form the Radical SAM core domain. Residues cysteine 96, cysteine 101, and cysteine 104 each contribute to the [4Fe-4S] cluster site. Acetyl-CoA is bound by residues lysine 156, 467-470 (QLHV), 491-493 (YGR), and tyrosine 524. The 141-residue stretch at 401-541 (VMYKKGIMPD…VGAYMGKYLE (141 aa)) folds into the N-acetyltransferase domain.

This sequence belongs to the ELP3 family. The cofactor is [4Fe-4S] cluster.

It catalyses the reaction uridine(34) in tRNA + acetyl-CoA + S-adenosyl-L-methionine + H2O = 5-(carboxymethyl)uridine(34) in tRNA + 5'-deoxyadenosine + L-methionine + CoA + 2 H(+). It participates in tRNA modification. Its function is as follows. tRNA uridine(34) acetyltransferase, which mediates formation of carboxymethyluridine in the wobble base at position 34 in tRNAs. The proposed mechanism is the following: (i) recruits S-adenosyl-L-methionine and cleaves it to generate a 5'-deoxyadenosine radical (5'-dA) in the radical S-adenosyl-L-methionine (rSAM) region, (ii) hydrolyzes acetyl-CoA in the N-acetyltransferase domain and (iii) an acetyl radical is formed by the products of the two domains and (iv) is transferred onto the C5 position of uridine(34) in the bound tRNA molecule. Does not show protein lysine acetyltransferase activity. The sequence is that of tRNA uridine(34) acetyltransferase from Methanocaldococcus jannaschii (strain ATCC 43067 / DSM 2661 / JAL-1 / JCM 10045 / NBRC 100440) (Methanococcus jannaschii).